A 249-amino-acid chain; its full sequence is 5'-nucleotidase SurE (249 aa).

A divalent metal cation contacts are provided by Asp-9, Asp-10, Ser-40, and Asn-92.

It belongs to the SurE nucleotidase family. It depends on a divalent metal cation as a cofactor.

It is found in the cytoplasm. It carries out the reaction a ribonucleoside 5'-phosphate + H2O = a ribonucleoside + phosphate. In terms of biological role, nucleotidase that shows phosphatase activity on nucleoside 5'-monophosphates. The polypeptide is 5'-nucleotidase SurE (Shewanella sediminis (strain HAW-EB3)).